A 307-amino-acid polypeptide reads, in one-letter code: Pseudouridine-5'-phosphate glycosidase (307 aa).

Residue Glu-28 is the Proton donor of the active site. Substrate contacts are provided by Lys-89 and Val-109. Asp-141 provides a ligand contact to Mn(2+). 143 to 145 (SAD) lines the substrate pocket. Residue Lys-162 is the Nucleophile of the active site.

It belongs to the pseudouridine-5'-phosphate glycosidase family. Homotrimer. Requires Mn(2+) as cofactor.

It carries out the reaction D-ribose 5-phosphate + uracil = psi-UMP + H2O. In terms of biological role, catalyzes the reversible cleavage of pseudouridine 5'-phosphate (PsiMP) to ribose 5-phosphate and uracil. Functions biologically in the cleavage direction, as part of a pseudouridine degradation pathway. The sequence is that of Pseudouridine-5'-phosphate glycosidase from Staphylococcus aureus (strain MW2).